A 114-amino-acid chain; its full sequence is RutC family protein YoaB (114 aa).

This sequence belongs to the RutC family.

The sequence is that of RutC family protein YoaB (yoaB) from Escherichia coli O6:H1 (strain CFT073 / ATCC 700928 / UPEC).